Consider the following 94-residue polypeptide: Large ribosomal subunit protein bL28 (94 aa).

This sequence belongs to the bacterial ribosomal protein bL28 family.

The protein is Large ribosomal subunit protein bL28 of Maricaulis maris (strain MCS10) (Caulobacter maris).